Consider the following 371-residue polypeptide: Chaperone protein DnaJ (371 aa).

The J domain occupies 4–68; it reads DYYQILGVSK…QKRAAYDRFG (65 aa). Residues 134 to 212 form a CR-type zinc finger; that stretch reads GIEKNISFSS…CHGMGRYHKQ (79 aa). Positions 147, 150, 164, 167, 186, 189, 200, and 203 each coordinate Zn(2+). 4 CXXCXGXG motif repeats span residues 147 to 154, 164 to 171, 186 to 193, and 200 to 207; these read CDTCHGTG, CDACGGVG, CHKCQGNG, and CKKCHGMG.

It belongs to the DnaJ family. In terms of assembly, homodimer. Requires Zn(2+) as cofactor.

The protein localises to the cytoplasm. Its function is as follows. Participates actively in the response to hyperosmotic and heat shock by preventing the aggregation of stress-denatured proteins and by disaggregating proteins, also in an autonomous, DnaK-independent fashion. Unfolded proteins bind initially to DnaJ; upon interaction with the DnaJ-bound protein, DnaK hydrolyzes its bound ATP, resulting in the formation of a stable complex. GrpE releases ADP from DnaK; ATP binding to DnaK triggers the release of the substrate protein, thus completing the reaction cycle. Several rounds of ATP-dependent interactions between DnaJ, DnaK and GrpE are required for fully efficient folding. Also involved, together with DnaK and GrpE, in the DNA replication of plasmids through activation of initiation proteins. In Rickettsia felis (strain ATCC VR-1525 / URRWXCal2) (Rickettsia azadi), this protein is Chaperone protein DnaJ.